The following is a 387-amino-acid chain: Succinyl-diaminopimelate desuccinylase (387 aa).

His73 contributes to the Zn(2+) binding site. Asp75 is an active-site residue. Residue Asp106 coordinates Zn(2+). Catalysis depends on Glu141, which acts as the Proton acceptor. Zn(2+)-binding residues include Glu142, Glu170, and His359.

This sequence belongs to the peptidase M20A family. DapE subfamily. As to quaternary structure, homodimer. Requires Zn(2+) as cofactor. Co(2+) is required as a cofactor.

It carries out the reaction N-succinyl-(2S,6S)-2,6-diaminopimelate + H2O = (2S,6S)-2,6-diaminopimelate + succinate. The protein operates within amino-acid biosynthesis; L-lysine biosynthesis via DAP pathway; LL-2,6-diaminopimelate from (S)-tetrahydrodipicolinate (succinylase route): step 3/3. Catalyzes the hydrolysis of N-succinyl-L,L-diaminopimelic acid (SDAP), forming succinate and LL-2,6-diaminopimelate (DAP), an intermediate involved in the bacterial biosynthesis of lysine and meso-diaminopimelic acid, an essential component of bacterial cell walls. In Methylorubrum populi (strain ATCC BAA-705 / NCIMB 13946 / BJ001) (Methylobacterium populi), this protein is Succinyl-diaminopimelate desuccinylase.